Reading from the N-terminus, the 952-residue chain is Protein translocase subunit SecA (952 aa).

Residues Gln135, 153-157 (GEGKT), and Asp575 each bind ATP. Residues 907–921 (AAPAAAIPGVSAKAA) show a composition bias toward low complexity. The segment at 907–946 (AAPAAAIPGVSAKAATQSTTPAAKEIGRNDPCPCGSGKKY) is disordered. Residues Cys938, Cys940, Cys949, and Cys950 each contribute to the Zn(2+) site.

Belongs to the SecA family. In terms of assembly, monomer and homodimer. Part of the essential Sec protein translocation apparatus which comprises SecA, SecYEG and auxiliary proteins SecDF. Other proteins may also be involved. Requires Zn(2+) as cofactor.

It is found in the cell membrane. It localises to the cytoplasm. The catalysed reaction is ATP + H2O + cellular proteinSide 1 = ADP + phosphate + cellular proteinSide 2.. In terms of biological role, part of the Sec protein translocase complex. Interacts with the SecYEG preprotein conducting channel. Has a central role in coupling the hydrolysis of ATP to the transfer of proteins into and across the cell membrane, serving as an ATP-driven molecular motor driving the stepwise translocation of polypeptide chains across the membrane. This chain is Protein translocase subunit SecA, found in Dehalococcoides mccartyi (strain CBDB1).